Consider the following 196-residue polypeptide: Transmembrane 4 L6 family member 5 (196 aa).

Residues 1-9 (MCTGKCARF) lie on the Cytoplasmic side of the membrane. A helical membrane pass occupies residues 10–30 (VGLSLIPLSLVCIVANALLLV). The Extracellular segment spans residues 31–45 (PNGQTTWTKDHLSLQ). Residues 46–66 (VWLMAGFVGGGLMVLCPGISA) traverse the membrane as a helical segment. At 67–89 (VRAGGKGCCGAGCCGNRCRMLRS) the chain is on the cytoplasmic side. Residues 90–110 (VFCSAIGLLGAIYCLSVSGTG) traverse the membrane as a helical segment. An interaction with MTOR and CASTOR1 region spans residues 90-196 (VFCSAIGLLG…DCRKKQGSSQ (107 aa)). The Extracellular segment spans residues 111–156 (LRIGPQCLMNGSWDYHFQDTAGSYLLNRTQWNLCVEPPDVVLWNVT). Asn-120 carries an N-linked (GlcNAc...) asparagine glycan. Residue 123-128 (WDYHFQ) coordinates L-arginine. N-linked (GlcNAc...) asparagine glycans are attached at residues Asn-137 and Asn-154. The helical transmembrane segment at 157 to 177 (LFSLLVAASCLEILLCGVQLV) threads the bilayer. Residues 178 to 196 (NASIGVLCGDCRKKQGSSQ) lie on the Cytoplasmic side of the membrane.

It belongs to the L6 tetraspanin family. As to quaternary structure, interacts with MTOR; the interaction is positively regulated by arginine and is negatively regulated by leucine. Interacts with SLC38A9. Interacts with SLC7A1; the interaction is negatively regulated by arginine. Interacts with CASTOR1; the interaction is positively regulated by leucine and is negatively regulated by arginine.

The protein localises to the lysosome membrane. The protein resides in the cell membrane. In terms of biological role, acts as a lysosomal membrane arginine sensor. Forms a complex with MTOR and SLC38A9 on lysosomal membranes in an arginine-regulated manner, leading to arginine efflux which enables the activation of mTORC1 which subsequently leads to RPS6KB1 and EIF4EBP1 phosphorylations. Facilitates cell cycle G1/S phase progression and the translocation of the CDK4-CCND1 complex into the nucleus. CDKN1B and RHOA/ROCK signaling activity are involved in TM4SF5-mediated acceleration of G1/S phase progression. The chain is Transmembrane 4 L6 family member 5 (TM4SF5) from Bos taurus (Bovine).